The sequence spans 557 residues: CTP synthase (557 aa).

Positions 1–267 (MAKYIFVTGG…GAYLTQRLGL (267 aa)) are amidoligase domain. CTP is bound at residue Ser-13. Ser-13 is a UTP binding site. An ATP-binding site is contributed by 14 to 19 (SVGKGI). Tyr-54 provides a ligand contact to L-glutamine. Asp-71 lines the ATP pocket. 2 residues coordinate Mg(2+): Asp-71 and Glu-141. CTP-binding positions include 148-150 (DIE), 188-193 (KTKPTQ), and Lys-224. UTP-binding positions include 188–193 (KTKPTQ) and Lys-224. The region spanning 292 to 535 (AIALVGKYVE…VAAAAKTFRE (244 aa)) is the Glutamine amidotransferase type-1 domain. An L-glutamine-binding site is contributed by Gly-354. Cys-381 serves as the catalytic Nucleophile; for glutamine hydrolysis. L-glutamine is bound by residues 382 to 385 (LGMQ), Glu-406, and Arg-463. Catalysis depends on residues His-508 and Glu-510. A disordered region spans residues 536–557 (GDQRPLPLEQNGAVTEHEPHSR).

Belongs to the CTP synthase family. Homotetramer.

It carries out the reaction UTP + L-glutamine + ATP + H2O = CTP + L-glutamate + ADP + phosphate + 2 H(+). The enzyme catalyses L-glutamine + H2O = L-glutamate + NH4(+). The catalysed reaction is UTP + NH4(+) + ATP = CTP + ADP + phosphate + 2 H(+). It functions in the pathway pyrimidine metabolism; CTP biosynthesis via de novo pathway; CTP from UDP: step 2/2. Allosterically activated by GTP, when glutamine is the substrate; GTP has no effect on the reaction when ammonia is the substrate. The allosteric effector GTP functions by stabilizing the protein conformation that binds the tetrahedral intermediate(s) formed during glutamine hydrolysis. Inhibited by the product CTP, via allosteric rather than competitive inhibition. Catalyzes the ATP-dependent amination of UTP to CTP with either L-glutamine or ammonia as the source of nitrogen. Regulates intracellular CTP levels through interactions with the four ribonucleotide triphosphates. The chain is CTP synthase from Roseiflexus sp. (strain RS-1).